Here is a 360-residue protein sequence, read N- to C-terminus: Fructose-bisphosphate aldolase 1 (360 aa).

Residue Ser-63 coordinates D-glyceraldehyde 3-phosphate. Asp-110 acts as the Proton donor in catalysis. The Zn(2+) site is built by His-111, Asp-145, Glu-175, and His-227. Residue Gly-228 coordinates dihydroxyacetone phosphate. His-266 lines the Zn(2+) pocket. Residue 267 to 269 (GGS) participates in dihydroxyacetone phosphate binding.

It belongs to the class II fructose-bisphosphate aldolase family. As to quaternary structure, homodimer. Zn(2+) serves as cofactor.

The catalysed reaction is beta-D-fructose 1,6-bisphosphate = D-glyceraldehyde 3-phosphate + dihydroxyacetone phosphate. It participates in carbohydrate degradation; glycolysis; D-glyceraldehyde 3-phosphate and glycerone phosphate from D-glucose: step 4/4. In terms of biological role, catalyzes the aldol condensation of dihydroxyacetone phosphate (DHAP or glycerone-phosphate) with glyceraldehyde 3-phosphate (G3P) to form fructose 1,6-bisphosphate (FBP) in gluconeogenesis and the reverse reaction in glycolysis. This is Fructose-bisphosphate aldolase 1 (FBA1) from Paracoccidioides lutzii (strain ATCC MYA-826 / Pb01) (Paracoccidioides brasiliensis).